Reading from the N-terminus, the 247-residue chain is Probable dihydroorotate dehydrogenase B (NAD(+)), electron transfer subunit (247 aa).

The FAD-binding FR-type domain maps to 1 to 87; that stretch reads MLRRVSIEET…RGPYGHGFSG (87 aa). C201, C206, C209, and C217 together coordinate [2Fe-2S] cluster.

This sequence belongs to the PyrK family. In terms of assembly, heterotetramer of 2 PyrK and 2 PyrD type B subunits. The cofactor is [2Fe-2S] cluster. FAD is required as a cofactor.

Its pathway is pyrimidine metabolism; UMP biosynthesis via de novo pathway; orotate from (S)-dihydroorotate (NAD(+) route): step 1/1. Its function is as follows. Responsible for channeling the electrons from the oxidation of dihydroorotate from the FMN redox center in the PyrD type B subunit to the ultimate electron acceptor NAD(+). The protein is Probable dihydroorotate dehydrogenase B (NAD(+)), electron transfer subunit of Pyrococcus furiosus (strain ATCC 43587 / DSM 3638 / JCM 8422 / Vc1).